A 168-amino-acid polypeptide reads, in one-letter code: Photosystem I assembly protein Ycf3 (168 aa).

TPR repeat units lie at residues 35-68 (AFTY…EIDP), 72-105 (SYIL…NPFL), and 120-153 (GEQA…TPGN).

Belongs to the Ycf3 family.

The protein resides in the plastid. It localises to the chloroplast thylakoid membrane. Essential for the assembly of the photosystem I (PSI) complex. May act as a chaperone-like factor to guide the assembly of the PSI subunits. The protein is Photosystem I assembly protein Ycf3 of Amborella trichopoda.